The following is a 174-amino-acid chain: Disulfide bond formation protein B (174 aa).

The Cytoplasmic segment spans residues 1–14; the sequence is MLHIFYIYSKSRKF. A helical transmembrane segment spans residues 15–31; that stretch reads WAILICSSISLISIALL. At 32-49 the chain is on the periplasmic side; it reads NQFFFLLKPCILCIYQRC. A disulfide bridge links Cys-41 with Cys-44. Residues 50 to 65 form a helical membrane-spanning segment; that stretch reads SLFGITIAGLIALISP. Residues 66–72 lie on the Cytoplasmic side of the membrane; that stretch reads KTTLLRL. A helical transmembrane segment spans residues 73–90; the sequence is FSIFIWLYSAIKGLYFSN. At 91–146 the chain is on the periplasmic side; the sequence is IHMQTTLHPSSSLTCDLFVSFPNWLPLNKWYPIIFDSKISNCYSYPQYLLYLEISQ. Cys-105 and Cys-132 are joined by a disulfide. Residues 147–165 form a helical membrane-spanning segment; that stretch reads WMLLFFLIYLIIAIFTIIS. Residues 166 to 174 lie on the Cytoplasmic side of the membrane; it reads QCHNLFQKK.

The protein belongs to the DsbB family.

The protein localises to the cell inner membrane. Functionally, required for disulfide bond formation in some periplasmic proteins. Acts by oxidizing the DsbA protein. The chain is Disulfide bond formation protein B from Blochmanniella floridana.